The following is a 351-amino-acid chain: MLKFIQNNREGTALLAILTLFALLGIIDRNYFSLQTFTMIFSSAQILILLAIGATLVMLTRNIDVSVGSITGLCAVTVGMALNAGFGLAASCLFALLVGMVAGFFNGILVTWLRIPAIVATLGTLGLYRGLMLLLTGGKWIEGLPADLKSLSTPILFSISPIGWLAMLLILAMAWLLGNTAFGRSFYATGDNLQGARQLGVRTDSIRIFAFSMNGVMAALAGIVFASQIGFIPNQTGNGLEMKAIAACVLGGISLLGGTGTIIGAILGAFLLTQIDSVLVLLRLPAWWNDFITGLVLLGVLVFDGRLRCAVERNIRQQKYARFTARAIISDKKTTVSDNTPAASNKKKAAL.

The next 9 helical transmembrane spans lie at 14–34 (LLAI…YFSL), 39–59 (MIFS…LVML), 70–90 (ITGL…GLAA), 93–113 (LFAL…VTWL), 115–135 (IPAI…MLLL), 155–175 (ILFS…AMAW), 213–233 (MNGV…GFIP), 252–272 (GISL…AFLL), and 284–304 (LPAW…LVFD).

The protein belongs to the binding-protein-dependent transport system permease family. AraH/RbsC subfamily. As to quaternary structure, the complex is composed of two ATP-binding proteins (LsrA), two transmembrane proteins (LsrC and LsrD) and a solute-binding protein (LsrB).

It is found in the cell inner membrane. Its function is as follows. Part of the ABC transporter complex LsrABCD involved in autoinducer 2 (AI-2) import. Probably responsible for the translocation of the substrate across the membrane. The polypeptide is Autoinducer 2 import system permease protein LsrC (lsrC) (Yersinia pseudotuberculosis serotype O:1b (strain IP 31758)).